The sequence spans 116 residues: U11-theraphotoxin-Hhn1c (116 aa).

The signal sequence occupies residues 1–21 (MNTVRVTFLLVFVLAVSLGQA). Residues 22–74 (DKDENRMEMQEKTEQGKSYLDFAENLLLQKLEELEAKLLEEDSEESRNSRQKR) constitute a propeptide that is removed on maturation. The disordered stretch occupies residues 61–83 (EEDSEESRNSRQKRCIGEGVPCD). Cystine bridges form between cysteine 75–cysteine 90, cysteine 82–cysteine 95, and cysteine 89–cysteine 110.

The protein belongs to the neurotoxin 14 (magi-1) family. 01 (HNTX-16) subfamily. In terms of tissue distribution, expressed by the venom gland.

The protein localises to the secreted. Functionally, probable ion channel inhibitor. In Cyriopagopus hainanus (Chinese bird spider), this protein is U11-theraphotoxin-Hhn1c.